The sequence spans 405 residues: Macrolide efflux protein A (405 aa).

11 helical membrane passes run 14–34, 48–68, 76–98, 145–165, 168–188, 222–242, 259–279, 285–305, 310–330, 350–370, and 373–393; these read IWAG…AIIF, MASL…GVLV, IMIG…AFYM, SLQS…YSVW, NAII…VAIV, FALL…NALF, ITEI…GLFG, ILLI…SGLL, FFIF…YSGV, LTGS…ALFA, and IGVN…AIVC.

It belongs to the major facilitator superfamily. Drug:H(+) antiporter-3 (DHA3) (TC 2.A.1.21) family.

Its subcellular location is the cell membrane. Functionally, confers resistance to 14-membered macrolides including erythromycin and to 15-membered macrolides but not to 16-membered macrolides, lincosamides or analogs of streptogramin B. May function as an efflux pump to regulate intracellular macrolide levels. This is Macrolide efflux protein A from Streptococcus pyogenes serotype M6 (strain ATCC BAA-946 / MGAS10394).